The chain runs to 219 residues: Probable GTP-binding protein EngB (219 aa).

In terms of domain architecture, EngB-type G spans 31 to 205; it reads VGVEIAFAGR…LSILNEWCHP (175 aa). GTP contacts are provided by residues 39–46, 66–70, 84–87, 151–154, and 184–186; these read GRSNAGKS, GRTQL, DLPG, TKSD, and FSA. Residues Ser46 and Thr68 each contribute to the Mg(2+) site.

It belongs to the TRAFAC class TrmE-Era-EngA-EngB-Septin-like GTPase superfamily. EngB GTPase family. The cofactor is Mg(2+).

Its function is as follows. Necessary for normal cell division and for the maintenance of normal septation. This Shewanella sp. (strain W3-18-1) protein is Probable GTP-binding protein EngB.